Here is a 542-residue protein sequence, read N- to C-terminus: Probable E3 ubiquitin-protein ligase ARI11 (542 aa).

A disordered region spans residues 1–25 (MSSSDRDIIDIESGEEDLYSDGGND). The span at 10–19 (DIESGEEDLY) shows a compositional bias: acidic residues. The segment at 135-342 (VDIQCGICFE…SDHKACNAFK (208 aa)) is TRIAD supradomain. Residues C139, C142, C156, H158, C161, C164, C184, C189, C228, C233, C251, C253, C258, C261, H266, C271, C298, and C301 each coordinate Zn(2+). The RING-type 1 zinc-finger motif lies at 139 to 189 (CGICFESYTRKEIARVSCGHPYCKTCWTGYITTKIEDGPGCLRVKCPEPSC). An IBR-type zinc finger spans residues 208 to 271 (DKYYRYFLRS…CEDAHSPVDC (64 aa)). The segment at 298–328 (CPKCKRPIEKNTGCNHMSCSAPCRHYFCWAC) adopts an RING-type 2; atypical zinc-finger fold. The active site involves C311. Residues C316, C320, C325, C328, H335, and C338 each contribute to the Zn(2+) site.

The protein belongs to the RBR family. Ariadne subfamily. The cofactor is Zn(2+).

The catalysed reaction is [E2 ubiquitin-conjugating enzyme]-S-ubiquitinyl-L-cysteine + [acceptor protein]-L-lysine = [E2 ubiquitin-conjugating enzyme]-L-cysteine + [acceptor protein]-N(6)-ubiquitinyl-L-lysine.. It functions in the pathway protein modification; protein ubiquitination. In terms of biological role, might act as an E3 ubiquitin-protein ligase, or as part of E3 complex, which accepts ubiquitin from specific E2 ubiquitin-conjugating enzymes and then transfers it to substrates. The protein is Probable E3 ubiquitin-protein ligase ARI11 (ARI11) of Arabidopsis thaliana (Mouse-ear cress).